The primary structure comprises 303 residues: Acetylglutamate kinase (303 aa).

Substrate is bound by residues 69–70 (GG), Arg-91, and Asn-201.

Belongs to the acetylglutamate kinase family. ArgB subfamily.

It is found in the cytoplasm. It catalyses the reaction N-acetyl-L-glutamate + ATP = N-acetyl-L-glutamyl 5-phosphate + ADP. It participates in amino-acid biosynthesis; L-arginine biosynthesis; N(2)-acetyl-L-ornithine from L-glutamate: step 2/4. Functionally, catalyzes the ATP-dependent phosphorylation of N-acetyl-L-glutamate. The sequence is that of Acetylglutamate kinase from Novosphingobium aromaticivorans (strain ATCC 700278 / DSM 12444 / CCUG 56034 / CIP 105152 / NBRC 16084 / F199).